The chain runs to 120 residues: Large ribosomal subunit protein uL29A (120 aa).

Residues serine 13 and serine 50 each carry the phosphoserine modification.

Belongs to the universal ribosomal protein uL29 family. Component of the large ribosomal subunit (LSU). Mature yeast ribosomes consist of a small (40S) and a large (60S) subunit. The 40S small subunit contains 1 molecule of ribosomal RNA (18S rRNA) and 33 different proteins (encoded by 57 genes). The large 60S subunit contains 3 rRNA molecules (25S, 5.8S and 5S rRNA) and 46 different proteins (encoded by 81 genes). uL29 is associated with the polypeptide exit tunnel.

The protein localises to the cytoplasm. In terms of biological role, component of the ribosome, a large ribonucleoprotein complex responsible for the synthesis of proteins in the cell. The small ribosomal subunit (SSU) binds messenger RNAs (mRNAs) and translates the encoded message by selecting cognate aminoacyl-transfer RNA (tRNA) molecules. The large subunit (LSU) contains the ribosomal catalytic site termed the peptidyl transferase center (PTC), which catalyzes the formation of peptide bonds, thereby polymerizing the amino acids delivered by tRNAs into a polypeptide chain. The nascent polypeptides leave the ribosome through a tunnel in the LSU and interact with protein factors that function in enzymatic processing, targeting, and the membrane insertion of nascent chains at the exit of the ribosomal tunnel. This chain is Large ribosomal subunit protein uL29A, found in Saccharomyces cerevisiae (strain ATCC 204508 / S288c) (Baker's yeast).